The primary structure comprises 512 residues: 2-isopropylmalate synthase (512 aa).

The Pyruvate carboxyltransferase domain maps to 4–266 (IQFFDTTLRD…ETNIVLNQFK (263 aa)). Mn(2+) is bound by residues Asp-13, His-201, His-203, and Asn-237. Residues 390–512 (ELKHLQVQYV…TKQVDFEEVK (123 aa)) are regulatory domain.

It belongs to the alpha-IPM synthase/homocitrate synthase family. LeuA type 1 subfamily. In terms of assembly, homodimer. Mn(2+) is required as a cofactor.

It is found in the cytoplasm. The enzyme catalyses 3-methyl-2-oxobutanoate + acetyl-CoA + H2O = (2S)-2-isopropylmalate + CoA + H(+). It participates in amino-acid biosynthesis; L-leucine biosynthesis; L-leucine from 3-methyl-2-oxobutanoate: step 1/4. In terms of biological role, catalyzes the condensation of the acetyl group of acetyl-CoA with 3-methyl-2-oxobutanoate (2-ketoisovalerate) to form 3-carboxy-3-hydroxy-4-methylpentanoate (2-isopropylmalate). In Listeria welshimeri serovar 6b (strain ATCC 35897 / DSM 20650 / CCUG 15529 / CIP 8149 / NCTC 11857 / SLCC 5334 / V8), this protein is 2-isopropylmalate synthase.